Consider the following 574-residue polypeptide: Arginine--tRNA ligase (574 aa).

Positions proline 126 to histidine 136 match the 'HIGH' region motif.

Belongs to the class-I aminoacyl-tRNA synthetase family. In terms of assembly, monomer.

The protein resides in the cytoplasm. The enzyme catalyses tRNA(Arg) + L-arginine + ATP = L-arginyl-tRNA(Arg) + AMP + diphosphate. This Chloroflexus aurantiacus (strain ATCC 29366 / DSM 635 / J-10-fl) protein is Arginine--tRNA ligase.